The chain runs to 455 residues: Chromosomal replication initiator protein DnaA 2 (455 aa).

The domain I, interacts with DnaA modulators stretch occupies residues 1 to 95 (MLTCNDCSTW…KRSSPQIAAS (95 aa)). Positions 96–112 (VTKPAVEVSEENKDFQL) are domain II. The domain III, AAA+ region stretch occupies residues 113 to 328 (KLNGAYRFDN…GAINKLTAYC (216 aa)). Glycine 157, glycine 159, lysine 160, and threonine 161 together coordinate ATP. A domain IV, binds dsDNA region spans residues 329–455 (LLFNKPLTET…IAIDSPQHFV (127 aa)).

Belongs to the DnaA family. In terms of assembly, oligomerizes as a right-handed, spiral filament on DNA at oriC.

The protein localises to the cytoplasm. Its function is as follows. Plays an essential role in the initiation and regulation of chromosomal replication. ATP-DnaA binds to the origin of replication (oriC) to initiate formation of the DNA replication initiation complex once per cell cycle. Binds the DnaA box (a 9 base pair repeat at the origin) and separates the double-stranded (ds)DNA. Forms a right-handed helical filament on oriC DNA; dsDNA binds to the exterior of the filament while single-stranded (ss)DNA is stabiized in the filament's interior. The ATP-DnaA-oriC complex binds and stabilizes one strand of the AT-rich DNA unwinding element (DUE), permitting loading of DNA polymerase. After initiation quickly degrades to an ADP-DnaA complex that is not apt for DNA replication. Binds acidic phospholipids. In Chlamydia muridarum (strain MoPn / Nigg), this protein is Chromosomal replication initiator protein DnaA 2.